Reading from the N-terminus, the 406-residue chain is Tryptophan synthase beta chain (406 aa).

Lys-99 carries the N6-(pyridoxal phosphate)lysine modification.

This sequence belongs to the TrpB family. As to quaternary structure, tetramer of two alpha and two beta chains. Requires pyridoxal 5'-phosphate as cofactor.

It carries out the reaction (1S,2R)-1-C-(indol-3-yl)glycerol 3-phosphate + L-serine = D-glyceraldehyde 3-phosphate + L-tryptophan + H2O. Its pathway is amino-acid biosynthesis; L-tryptophan biosynthesis; L-tryptophan from chorismate: step 5/5. Its function is as follows. The beta subunit is responsible for the synthesis of L-tryptophan from indole and L-serine. The chain is Tryptophan synthase beta chain from Rhizobium meliloti (strain 1021) (Ensifer meliloti).